A 532-amino-acid chain; its full sequence is Flavin-containing monooxygenase 3 (532 aa).

FAD contacts are provided by residues 9 to 13 (GAGVS), E32, 40 to 41 (LW), and 61 to 62 (NS). NADP(+)-binding positions include 60–61 (SN) and 195–198 (SGCD). S401 is subject to Phosphoserine. Residues 510-530 (FFFHWLKLFAIPILLIAVFLV) traverse the membrane as a helical segment.

It belongs to the FMO family. Requires FAD as cofactor. Liver.

Its subcellular location is the microsome membrane. It is found in the endoplasmic reticulum membrane. The enzyme catalyses trimethylamine + NADPH + O2 = trimethylamine N-oxide + NADP(+) + H2O. It catalyses the reaction N,N-dimethylaniline + NADPH + O2 + H(+) = N,N-dimethylaniline N-oxide + NADP(+) + H2O. It carries out the reaction hypotaurine + NADPH + O2 + H(+) = taurine + NADP(+) + H2O. The catalysed reaction is (S)-nicotine + NADPH + O2 = trans-(S)-nicotine N(1')-oxide + NADP(+) + H2O. The enzyme catalyses albendazole + NADPH + O2 + H(+) = albendazole S-oxide + NADP(+) + H2O. Its function is as follows. Essential hepatic enzyme that catalyzes the oxygenation of a wide variety of nitrogen- and sulfur-containing compounds including drugs as well as dietary compounds. Plays an important role in the metabolism of trimethylamine (TMA), via the production of trimethylamine N-oxide (TMAO) metabolite. TMA is generated by the action of gut microbiota using dietary precursors such as choline, choline containing compounds, betaine or L-carnitine. By regulating TMAO concentration, FMO3 directly impacts both platelet responsiveness and rate of thrombus formation. This chain is Flavin-containing monooxygenase 3 (FMO3), found in Homo sapiens (Human).